The chain runs to 362 residues: Aminomethyltransferase (362 aa).

This sequence belongs to the GcvT family. As to quaternary structure, the glycine cleavage system is composed of four proteins: P, T, L and H.

The catalysed reaction is N(6)-[(R)-S(8)-aminomethyldihydrolipoyl]-L-lysyl-[protein] + (6S)-5,6,7,8-tetrahydrofolate = N(6)-[(R)-dihydrolipoyl]-L-lysyl-[protein] + (6R)-5,10-methylene-5,6,7,8-tetrahydrofolate + NH4(+). Functionally, the glycine cleavage system catalyzes the degradation of glycine. This is Aminomethyltransferase from Chloroherpeton thalassium (strain ATCC 35110 / GB-78).